The primary structure comprises 71 residues: Long neurotoxin 1 (71 aa).

5 disulfide bridges follow: C3-C20, C14-C41, C26-C30, C45-C56, and C57-C62.

Belongs to the three-finger toxin family. Long-chain subfamily. Type II alpha-neurotoxin sub-subfamily. As to expression, expressed by the venom gland.

The protein localises to the secreted. In terms of biological role, binds with high affinity to muscular (alpha-1/CHRNA1) and neuronal (alpha-7/CHRNA7) nicotinic acetylcholine receptor (nAChR) and inhibits acetylcholine from binding to the receptor, thereby impairing neuromuscular and neuronal transmission. The protein is Long neurotoxin 1 of Naja nivea (Cape cobra).